A 760-amino-acid chain; its full sequence is Ring-infected erythrocyte surface antigen (760 aa).

The disordered stretch occupies residues 214–300 (DTSQEESVEE…SDVQQTSEAA (87 aa)). Residues 216 to 230 (SQEESVEENEEEHTV) show a composition bias toward acidic residues. Residues 231–242 (DDEHVEEHTADD) are compositionally biased toward basic and acidic residues. The segment covering 243-256 (EHVEEPTVADDEHV) has biased composition (acidic residues). Residues 262–288 (ADEHVEEPTVAEEHVEEPTVAEEHVEE) show a composition bias toward basic and acidic residues. One can recognise a J domain in the interval 307–375 (DTLYYDILGV…KRWYNKYGYD (69 aa)). Residues N425, N559, and N563 are each glycosylated (N-linked (GlcNAc...) asparagine). The segment covering 683-692 (EHDAEENVEH) has biased composition (basic and acidic residues). A disordered region spans residues 683–738 (EHDAEENVEHDAEENAEENVEENVEEVEENVEENVEENVGEKKMRREEKKKRVQEP). Over residues 693–720 (DAEENAEENVEENVEEVEENVEENVEEN) the composition is skewed to acidic residues.

The protein resides in the cell membrane. In terms of biological role, may disrupt the normal intermolecular interactions of the cytoplasmic domain of band 3 and thereby facilitate the invagination of the red cell membrane which is necessary for the formation of the parasitophorous vacuole. This chain is Ring-infected erythrocyte surface antigen (RESA), found in Plasmodium falciparum (isolate NF7 / Ghana).